Consider the following 146-residue polypeptide: Phage-like element PBSX protein XkdJ (146 aa).

The protein to B.subtilis YqbJ.

The chain is Phage-like element PBSX protein XkdJ (xkdJ) from Bacillus subtilis (strain 168).